The chain runs to 703 residues: Elongation factor G (703 aa).

The 284-residue stretch at 9–292 folds into the tr-type G domain; that stretch reads ERTRNIGIMA…AVVDYLPGPL (284 aa). Residues 18 to 25, 91 to 95, and 145 to 148 contribute to the GTP site; these read AHIDAGKT, DTPGH, and NKMD.

This sequence belongs to the TRAFAC class translation factor GTPase superfamily. Classic translation factor GTPase family. EF-G/EF-2 subfamily.

The protein localises to the cytoplasm. Catalyzes the GTP-dependent ribosomal translocation step during translation elongation. During this step, the ribosome changes from the pre-translocational (PRE) to the post-translocational (POST) state as the newly formed A-site-bound peptidyl-tRNA and P-site-bound deacylated tRNA move to the P and E sites, respectively. Catalyzes the coordinated movement of the two tRNA molecules, the mRNA and conformational changes in the ribosome. This chain is Elongation factor G, found in Leuconostoc citreum (strain KM20).